The chain runs to 524 residues: Serine/threonine-protein phosphatase 2A 56 kDa regulatory subunit gamma isoform (524 aa).

Methionine 1 carries the N-acetylmethionine modification. Residues 472–489 (RKTVSDEARQAQKDPKKE) carry the Nuclear localization signal motif. Residues 476–524 (SDEARQAQKDPKKERPLARRKSELPQDPHTKKALEAHCRADELVPQDGR) form a disordered region.

This sequence belongs to the phosphatase 2A regulatory subunit B56 family. PP2A consists of a common heterodimeric core enzyme, composed of PPP2CA a 36 kDa catalytic subunit (subunit C) and PPP2R1A a 65 kDa constant regulatory subunit (PR65 or subunit A), that associates with a variety of regulatory subunits. Proteins that associate with the core dimer include three families of regulatory subunits B (the R2/B/PR55/B55, R3/B''/PR72/PR130/PR59 and R5/B'/B56 families), the 48 kDa variable regulatory subunit, viral proteins, and cell signaling molecules. Interacts with SGO1. Interacts with SGO1; the interaction is direct. May interact with TP53. Interacts with IER3 and/or ERK kinases; regulates ERK dephosphorylation Interacts with CIP2A; this interaction stabilizes CIP2A. As to expression, highly expressed in testis, heart and spleen. Also found in brain and skeletal muscle.

The protein localises to the nucleus. It is found in the chromosome. Its subcellular location is the centromere. Its function is as follows. The B regulatory subunit might modulate substrate selectivity and catalytic activity, and might also direct the localization of the catalytic enzyme to a particular subcellular compartment. The PP2A-PPP2R5C holoenzyme may activate TP53 and play a role in DNA damage-induced inhibition of cell proliferation. PP2A-PPP2R5C may also regulate the ERK signaling pathway through ERK dephosphorylation. The protein is Serine/threonine-protein phosphatase 2A 56 kDa regulatory subunit gamma isoform (PPP2R5C) of Oryctolagus cuniculus (Rabbit).